Here is a 123-residue protein sequence, read N- to C-terminus: Small ribosomal subunit protein uS12c (123 aa).

It belongs to the universal ribosomal protein uS12 family. In terms of assembly, part of the 30S ribosomal subunit.

It is found in the plastid. The protein localises to the chloroplast. With S4 and S5 plays an important role in translational accuracy. Located at the interface of the 30S and 50S subunits. The protein is Small ribosomal subunit protein uS12c (rps12) of Physcomitrium patens (Spreading-leaved earth moss).